Here is a 346-residue protein sequence, read N- to C-terminus: Nuclear distribution protein nudE-like 1 (346 aa).

The stretch at 13–190 (KEEIVYWREL…LAVRERQTNG (178 aa)) forms a coiled coil. Disordered stretches follow at residues 184–205 (RERQTNGTRKSAPSSPTLDCDK) and 325–346 (YDPPGVLGSRPPSPPGMLPLSV). Positions 188-200 (TNGTRKSAPSSPT) are enriched in polar residues. Residues 335–346 (PPSPPGMLPLSV) show a composition bias toward pro residues.

Belongs to the nudE family. Phosphorylated in mitosis.

Its subcellular location is the cytoplasm. It localises to the cytoskeleton. The protein localises to the microtubule organizing center. The protein resides in the centrosome. It is found in the spindle. Its function is as follows. Required for organization of the cellular microtubule array and microtubule anchoring at the centrosome. Positively regulates the activity of the minus-end directed microtubule motor protein dynein. May enhance dynein-mediated microtubule sliding by targeting dynein to the microtubule plus end. Positively regulates lysosome peripheral distribution and ruffled border formation in osteoclasts. The chain is Nuclear distribution protein nudE-like 1 (ndel1) from Xenopus tropicalis (Western clawed frog).